A 390-amino-acid chain; its full sequence is S-adenosylmethionine synthase (390 aa).

Glu-12 serves as a coordination point for Mg(2+). Position 18 (His-18) interacts with ATP. Glu-46 is a binding site for K(+). The L-methionine site is built by Glu-59 and Gln-102. Residues 170-172 (DGK), 238-241 (SGRF), Asp-249, 255-256 (RK), Ala-272, Lys-276, and Lys-280 each bind ATP. Asp-249 lines the L-methionine pocket. Lys-280 lines the L-methionine pocket.

The protein belongs to the AdoMet synthase family. In terms of assembly, homotetramer. Requires Mn(2+) as cofactor. It depends on Mg(2+) as a cofactor. Co(2+) is required as a cofactor. The cofactor is K(+).

It is found in the cytoplasm. It catalyses the reaction L-methionine + ATP + H2O = S-adenosyl-L-methionine + phosphate + diphosphate. It functions in the pathway amino-acid biosynthesis; S-adenosyl-L-methionine biosynthesis; S-adenosyl-L-methionine from L-methionine: step 1/1. Catalyzes the formation of S-adenosylmethionine from methionine and ATP. The reaction comprises two steps that are both catalyzed by the same enzyme: formation of S-adenosylmethionine (AdoMet) and triphosphate, and subsequent hydrolysis of the triphosphate. In Chlamydomonas reinhardtii (Chlamydomonas smithii), this protein is S-adenosylmethionine synthase (METM).